The primary structure comprises 1028 residues: Formin-like protein 3 (1028 aa).

A lipid anchor (N-myristoyl glycine) is attached at Gly-2. Residues 26–472 enclose the GBD/FH3 domain; sequence MPMPEPCELE…EAFQRRCHLE (447 aa). Thr-95 is modified (phosphothreonine). Residue Ser-174 is modified to Phosphoserine. Positions 493–541 are disordered; sequence ELSEGMPPSDLDLLAPAPPPEEVLPLPPPPAPPLPPPPPPLPDKCPPAP. Over residues 508–541 the composition is skewed to pro residues; the sequence is PAPPPEEVLPLPPPPAPPLPPPPPPLPDKCPPAP. In terms of domain architecture, FH2 spans 561–951; the sequence is IKKPIKTKFR…MREKQLAQEA (391 aa). In terms of domain architecture, DAD spans 986–1018; the sequence is YEGKDGTIEDIITVLKSVPFTARTAKRGSRFFC. A Phosphoserine modification is found at Ser-1014.

The protein belongs to the formin homology family. In terms of assembly, interacts with SRGAP2 (via SH3 domain). Expressed in endothelial cells.

Its subcellular location is the cytoplasm. It is found in the cell membrane. In terms of biological role, plays a role in the regulation of cell morphology and cytoskeletal organization. Required in the control of cell shape and migration. Required for developmental angiogenesis. In this process, required for microtubule reorganization and for efficient endothelial cell elongation. In quiescent endothelial cells, triggers rearrangement of the actin cytoskeleton, but does not alter microtubule alignement. The protein is Formin-like protein 3 (FMNL3) of Homo sapiens (Human).